The primary structure comprises 304 residues: tRNA pseudouridine synthase A (304 aa).

Residue D65 is the Nucleophile of the active site. A substrate-binding site is contributed by Y123. The segment at 274–304 is disordered; it reads HTGQEKPEARLGNGDLESREERPPHEMSPLH. A compositionally biased stretch (basic and acidic residues) spans 289 to 298; the sequence is LESREERPPH.

This sequence belongs to the tRNA pseudouridine synthase TruA family. As to quaternary structure, homodimer.

The enzyme catalyses uridine(38/39/40) in tRNA = pseudouridine(38/39/40) in tRNA. In terms of biological role, formation of pseudouridine at positions 38, 39 and 40 in the anticodon stem and loop of transfer RNAs. The sequence is that of tRNA pseudouridine synthase A from Gloeobacter violaceus (strain ATCC 29082 / PCC 7421).